The chain runs to 501 residues: Phenylalanine--tRNA ligase alpha subunit (501 aa).

2 residues coordinate L-phenylalanine: threonine 340 and phenylalanine 423. A Mg(2+)-binding site is contributed by glutamate 425. Phenylalanine 448 lines the L-phenylalanine pocket.

It belongs to the class-II aminoacyl-tRNA synthetase family. Phe-tRNA synthetase alpha subunit type 2 subfamily. Tetramer of two alpha and two beta subunits. Mg(2+) is required as a cofactor.

It localises to the cytoplasm. It catalyses the reaction tRNA(Phe) + L-phenylalanine + ATP = L-phenylalanyl-tRNA(Phe) + AMP + diphosphate + H(+). This is Phenylalanine--tRNA ligase alpha subunit from Methanococcus maripaludis (strain C7 / ATCC BAA-1331).